A 908-amino-acid polypeptide reads, in one-letter code: Flap endonuclease GEN homolog 1 (908 aa).

Residues 2 to 96 (GVNDLWQILE…SKRNQSRYGS (95 aa)) form an XPG-N domain region. Aspartate 30, glutamate 75, glutamate 134, glutamate 136, aspartate 155, aspartate 157, and aspartate 208 together coordinate Mg(2+). The interval 122–208 (ECLGIPWVQA…VGLAILLGCD (87 aa)) is XPG-I domain. Residues 208 to 384 (DYLPKGVPGV…LLVLLTHYDM (177 aa)) are 5'-3' exonuclease domain. The chromodomain stretch occupies residues 390–464 (GSRNSNQLQP…VYQKQKLEIK (75 aa)). 2 positions are modified to phosphoserine: serine 801 and serine 802.

The protein belongs to the XPG/RAD2 endonuclease family. GEN subfamily. Largely monomeric, dimerizes on the Holliday junction and the first nick occurs upon dimerization at the junction. Requires Mg(2+) as cofactor.

The protein resides in the nucleus. Functionally, endonuclease which resolves Holliday junctions (HJs) by the introduction of symmetrically related cuts across the junction point, to produce nicked duplex products in which the nicks can be readily ligated. Four-way DNA intermediates, also known as Holliday junctions, are formed during homologous recombination and DNA repair, and their resolution is necessary for proper chromosome segregation. Cleaves HJs by a nick and counter-nick mechanism involving dual coordinated incisions that lead to the formation of ligatable nicked duplex products. Cleavage of the first strand is rate limiting, while second strand cleavage is rapid. Largely monomeric, dimerizes on the HJ and the first nick occurs upon dimerization at the junction. Efficiently cleaves both single and double HJs contained within large recombination intermediates. Exhibits a weak sequence preference for incision between two G residues that reside in a T-rich region of DNA. Also has endonuclease activity on 5'-flap and replication fork (RF) DNA substrates. This Homo sapiens (Human) protein is Flap endonuclease GEN homolog 1 (GEN1).